The sequence spans 396 residues: S-adenosylmethionine synthase (396 aa).

Position 16 (H16) interacts with ATP. D18 contributes to the Mg(2+) binding site. E44 is a K(+) binding site. Residues E57 and Q100 each coordinate L-methionine. Positions 100–110 (QSPDINQGVDR) are flexible loop. ATP contacts are provided by residues 165–167 (DAK), D240, 246–247 (RK), A263, and K267. D240 is an L-methionine binding site. K271 is an L-methionine binding site.

Belongs to the AdoMet synthase family. Homotetramer; dimer of dimers. The cofactor is Mg(2+). K(+) is required as a cofactor.

Its subcellular location is the cytoplasm. The catalysed reaction is L-methionine + ATP + H2O = S-adenosyl-L-methionine + phosphate + diphosphate. It participates in amino-acid biosynthesis; S-adenosyl-L-methionine biosynthesis; S-adenosyl-L-methionine from L-methionine: step 1/1. Catalyzes the formation of S-adenosylmethionine (AdoMet) from methionine and ATP. The overall synthetic reaction is composed of two sequential steps, AdoMet formation and the subsequent tripolyphosphate hydrolysis which occurs prior to release of AdoMet from the enzyme. This Pseudomonas fluorescens (strain Pf0-1) protein is S-adenosylmethionine synthase.